The sequence spans 158 residues: Transcription elongation factor GreA (158 aa).

Belongs to the GreA/GreB family.

Its function is as follows. Necessary for efficient RNA polymerase transcription elongation past template-encoded arresting sites. The arresting sites in DNA have the property of trapping a certain fraction of elongating RNA polymerases that pass through, resulting in locked ternary complexes. Cleavage of the nascent transcript by cleavage factors such as GreA or GreB allows the resumption of elongation from the new 3'terminus. GreA releases sequences of 2 to 3 nucleotides. The sequence is that of Transcription elongation factor GreA from Rhizobium leguminosarum bv. trifolii (strain WSM2304).